The primary structure comprises 64 residues: Large ribosomal subunit protein uL29 (64 aa).

It belongs to the universal ribosomal protein uL29 family.

This is Large ribosomal subunit protein uL29 from Levilactobacillus brevis (strain ATCC 367 / BCRC 12310 / CIP 105137 / JCM 1170 / LMG 11437 / NCIMB 947 / NCTC 947) (Lactobacillus brevis).